A 136-amino-acid polypeptide reads, in one-letter code: Histone H3 (136 aa).

The interval 1 to 43 (MARTKQTARKSTGGKAPRKQLATKAARKSAPASGGVKKPHRFR) is disordered. K5 carries the N6-methylated lysine modification. At K10 the chain carries N6-acetyllysine; alternate. K10 is modified (N6-methylated lysine; alternate). A Phosphoserine modification is found at S11. The residue at position 12 (T12) is a Phosphothreonine. An N6-acetyllysine modification is found at K15. An N6-acetyllysine; alternate mark is found at K19 and K24. K19 and K24 each carry N6-methylated lysine; alternate. The residue at position 28 (K28) is an N6-methylated lysine. S29 bears the Phosphoserine mark. An N6-methylated lysine modification is found at K37.

Belongs to the histone H3 family. As to quaternary structure, the nucleosome is a histone octamer containing two molecules each of H2A, H2B, H3 and H4 assembled in one H3-H4 heterotetramer and two H2A-H2B heterodimers. The octamer wraps approximately 147 bp of DNA. Post-translationally, acetylation is generally linked to gene activation. Can be acetylated to form H3K9ac, H3K14ac, H3K18ac and H3K23ac. H3K9ac could compete with H3K9me and prevent gene silencing. H3K9ac is restricted to euchromatin. In terms of processing, methylated to form mainly H3K4me, H3K9me, H3K18me, H3K23me, H3K27me and H3K36me. H3K4me1/2/3, H3K9me3, H3K27me3 and H3K36me1/2/3 are typical marks for euchromatin, whereas heterochromatic chromocenters are enriched in H3K9me1/2 and H3K27me1/2. H2BK143ub1 is probably prerequisite for H3K4me. Can be phosphorylated to form H3S10ph, H3T11ph and H3S28ph.

Its subcellular location is the nucleus. The protein localises to the chromosome. Its function is as follows. Core component of nucleosome. Nucleosomes wrap and compact DNA into chromatin, limiting DNA accessibility to the cellular machineries which require DNA as a template. Histones thereby play a central role in transcription regulation, DNA repair, DNA replication and chromosomal stability. DNA accessibility is regulated via a complex set of post-translational modifications of histones, also called histone code, and nucleosome remodeling. The polypeptide is Histone H3 (Griffithsia japonica (Red alga)).